Here is a 365-residue protein sequence, read N- to C-terminus: Protein RecA (365 aa).

Residue 76 to 83 (GPESSGKT) coordinates ATP. Residues 346-365 (DVPGSERDGDEDAGDMEASA) are disordered. Positions 353 to 365 (DGDEDAGDMEASA) are enriched in acidic residues.

The protein belongs to the RecA family.

It localises to the cytoplasm. Its function is as follows. Can catalyze the hydrolysis of ATP in the presence of single-stranded DNA, the ATP-dependent uptake of single-stranded DNA by duplex DNA, and the ATP-dependent hybridization of homologous single-stranded DNAs. It interacts with LexA causing its activation and leading to its autocatalytic cleavage. The polypeptide is Protein RecA (Parvibaculum lavamentivorans (strain DS-1 / DSM 13023 / NCIMB 13966)).